The primary structure comprises 234 residues: Phosphoribosylformylglycinamidine synthase subunit PurQ (234 aa).

Positions 4 to 234 (RIGVVTFPGS…TSILKKLVNA (231 aa)) constitute a Glutamine amidotransferase type-1 domain. The active-site Nucleophile is the Cys-87. Active-site residues include His-204 and Glu-206.

Part of the FGAM synthase complex composed of 1 PurL, 1 PurQ and 2 PurS subunits.

It is found in the cytoplasm. It carries out the reaction N(2)-formyl-N(1)-(5-phospho-beta-D-ribosyl)glycinamide + L-glutamine + ATP + H2O = 2-formamido-N(1)-(5-O-phospho-beta-D-ribosyl)acetamidine + L-glutamate + ADP + phosphate + H(+). It catalyses the reaction L-glutamine + H2O = L-glutamate + NH4(+). It functions in the pathway purine metabolism; IMP biosynthesis via de novo pathway; 5-amino-1-(5-phospho-D-ribosyl)imidazole from N(2)-formyl-N(1)-(5-phospho-D-ribosyl)glycinamide: step 1/2. Its function is as follows. Part of the phosphoribosylformylglycinamidine synthase complex involved in the purines biosynthetic pathway. Catalyzes the ATP-dependent conversion of formylglycinamide ribonucleotide (FGAR) and glutamine to yield formylglycinamidine ribonucleotide (FGAM) and glutamate. The FGAM synthase complex is composed of three subunits. PurQ produces an ammonia molecule by converting glutamine to glutamate. PurL transfers the ammonia molecule to FGAR to form FGAM in an ATP-dependent manner. PurS interacts with PurQ and PurL and is thought to assist in the transfer of the ammonia molecule from PurQ to PurL. This is Phosphoribosylformylglycinamidine synthase subunit PurQ from Streptomyces avermitilis (strain ATCC 31267 / DSM 46492 / JCM 5070 / NBRC 14893 / NCIMB 12804 / NRRL 8165 / MA-4680).